The chain runs to 729 residues: DNA topoisomerase 3 (729 aa).

A Toprim domain is found at 3-136 (KSVVIAEKPS…IKRLWISSVT (134 aa)). 2 residues coordinate Mg(2+): glutamate 9 and aspartate 105. In terms of domain architecture, Topo IA-type catalytic spans 153-594 (YDNLYASAVA…EMKNYTKEIV (442 aa)). The interval 187–192 (NCGRVQ) is interaction with DNA. The active-site O-(5'-phospho-DNA)-tyrosine intermediate is tyrosine 310. The segment covering 686-713 (ERRKKESGNKADKRDVQKYMKQQKKEEE) has biased composition (basic and acidic residues). The tract at residues 686-718 (ERRKKESGNKADKRDVQKYMKQQKKEEEPLNNP) is disordered.

The protein belongs to the type IA topoisomerase family. The cofactor is Mg(2+).

The catalysed reaction is ATP-independent breakage of single-stranded DNA, followed by passage and rejoining.. Releases the supercoiling and torsional tension of DNA, which is introduced during the DNA replication and transcription, by transiently cleaving and rejoining one strand of the DNA duplex. Introduces a single-strand break via transesterification at a target site in duplex DNA. The scissile phosphodiester is attacked by the catalytic tyrosine of the enzyme, resulting in the formation of a DNA-(5'-phosphotyrosyl)-enzyme intermediate and the expulsion of a 3'-OH DNA strand. The free DNA strand then undergoes passage around the unbroken strand, thus removing DNA supercoils. Finally, in the religation step, the DNA 3'-OH attacks the covalent intermediate to expel the active-site tyrosine and restore the DNA phosphodiester backbone. In Bacillus thuringiensis subsp. konkukian (strain 97-27), this protein is DNA topoisomerase 3.